The chain runs to 794 residues: Signal transducer and activator of transcription 5A (794 aa).

Phosphotyrosine is present on Tyr-90. Ser-129 carries the phosphoserine modification. An SH2 domain is found at 589–686 (WNDGAILGFV…EVFSKYYTPV (98 aa)). Tyr-682 is modified (phosphotyrosine). The residue at position 694 (Tyr-694) is a Phosphotyrosine; by JAK2. Positions 765–794 (EELLRRPNGQSGPLSPPPAGLFTPARGSLS) are disordered.

It belongs to the transcription factor STAT family. In terms of assembly, forms a homodimer or a heterodimer with a related family member. Binds NR3C1. Interacts with NCOA1 and SOCS7. Interacts with ERBB4. Interacts with EBF4. Interacts with CD69. In terms of processing, ISGylated. Post-translationally, tyrosine phosphorylated in response to KITLG/SCF, IL2, IL3, IL7, IL15, CSF2/GMCSF, GH1, PRL, EPO and THPO. Activated KIT promotes phosphorylation on tyrosine residues and subsequent translocation to the nucleus. Tyrosine phosphorylated in response to constitutively activated FGFR1, FGFR2, FGFR3 and FGFR4. Tyrosine phosphorylation is required for DNA-binding activity and dimerization. Serine phosphorylation is also required for maximal transcriptional activity. Tyrosine phosphorylated in response to signaling via activated FLT3; wild-type FLT3 results in much weaker phosphorylation than constitutively activated mutant FLT3. Alternatively, can be phosphorylated by JAK2 at Tyr-694. As to expression, found in mammary gland and, in lesser extent, in ovary, thymus, spleen, kidney, lung, muscle and adrenal gland.

It is found in the cytoplasm. The protein localises to the nucleus. Functionally, carries out a dual function: signal transduction and activation of transcription. Mediates cellular responses to the cytokine KITLG/SCF and other growth factors. May mediate cellular responses to activated FGFR1, FGFR2, FGFR3 and FGFR4. Binds to the GAS element and activates PRL-induced transcription. Regulates the expression of milk proteins during lactation. This is Signal transducer and activator of transcription 5A (STAT5A) from Ovis aries (Sheep).